The following is a 423-amino-acid chain: Serine hydroxymethyltransferase (423 aa).

Residues leucine 121 and 125–127 each bind (6S)-5,6,7,8-tetrahydrofolate; that span reads GHL. Lysine 230 is modified (N6-(pyridoxal phosphate)lysine). (6S)-5,6,7,8-tetrahydrofolate is bound at residue 355–357; that stretch reads SPF.

It belongs to the SHMT family. As to quaternary structure, homodimer. Pyridoxal 5'-phosphate serves as cofactor.

It localises to the cytoplasm. The enzyme catalyses (6R)-5,10-methylene-5,6,7,8-tetrahydrofolate + glycine + H2O = (6S)-5,6,7,8-tetrahydrofolate + L-serine. Its pathway is one-carbon metabolism; tetrahydrofolate interconversion. The protein operates within amino-acid biosynthesis; glycine biosynthesis; glycine from L-serine: step 1/1. Its function is as follows. Catalyzes the reversible interconversion of serine and glycine with tetrahydrofolate (THF) serving as the one-carbon carrier. This reaction serves as the major source of one-carbon groups required for the biosynthesis of purines, thymidylate, methionine, and other important biomolecules. Also exhibits THF-independent aldolase activity toward beta-hydroxyamino acids, producing glycine and aldehydes, via a retro-aldol mechanism. This is Serine hydroxymethyltransferase from Hydrogenovibrio crunogenus (strain DSM 25203 / XCL-2) (Thiomicrospira crunogena).